Reading from the N-terminus, the 92-residue chain is Small ribosomal subunit protein uS19c (92 aa).

Belongs to the universal ribosomal protein uS19 family.

The protein resides in the plastid. The protein localises to the chloroplast. Functionally, protein S19 forms a complex with S13 that binds strongly to the 16S ribosomal RNA. The protein is Small ribosomal subunit protein uS19c of Chara vulgaris (Common stonewort).